Reading from the N-terminus, the 137-residue chain is DNA-directed RNA polymerase I subunit RPA14 (137 aa).

The segment at 100–137 (PPAQDFSAAPIQVSTTEKKETSIGVSATGGKKTTFADE) is disordered. Serine 121 bears the Phosphoserine mark.

Component of the RNA polymerase I (Pol I) complex consisting of 14 subunits: RPA135, RPA190, RPC40, RPA14, RPB5, RPO26, RPA43, RPB8, RPA12, RPB10, RPC19, RPC10, RPA49 and RPA34. The complex is composed of a horseshoe-shaped core containing ten subunits (RPA135, RPA190, RPB5, RPO26, RPB8, RPB10, RPC10, RPA12, RPC19 and RPC40) where RPA135 and RPA190 form the DNA-binding cleft. Outside of the core, RPA14 and RPA43 form the stalk that mediates interactions with transcription initiation factors and newly synthesized RNA. Post-translationally, the N-terminus is blocked.

Its subcellular location is the nucleus. It localises to the nucleolus. Functionally, DNA-dependent RNA polymerases catalyze the transcription of DNA into RNA using the four ribonucleoside triphosphates as substrates. Component of RNA polymerase I (Pol I) which synthesizes ribosomal RNA precursors. RPA14 seems to play a role in the stability of subunits RPO26 and RPA43. In vitro, the RPA14-RPA43 subcomplex binds single-stranded RNA. The sequence is that of DNA-directed RNA polymerase I subunit RPA14 (RPA14) from Saccharomyces cerevisiae (strain ATCC 204508 / S288c) (Baker's yeast).